The primary structure comprises 431 residues: Glutamate--tRNA ligase 1 (431 aa).

A 'HIGH' region motif is present at residues 6–16 (PSPTGDMHIGN). Positions 235 to 239 (KMSKR) match the 'KMSKS' region motif. K238 is a binding site for ATP.

It belongs to the class-I aminoacyl-tRNA synthetase family. Glutamate--tRNA ligase type 1 subfamily. Monomer.

Its subcellular location is the cytoplasm. It catalyses the reaction tRNA(Glu) + L-glutamate + ATP = L-glutamyl-tRNA(Glu) + AMP + diphosphate. Catalyzes the attachment of glutamate to tRNA(Glu) in a two-step reaction: glutamate is first activated by ATP to form Glu-AMP and then transferred to the acceptor end of tRNA(Glu). The polypeptide is Glutamate--tRNA ligase 1 (Campylobacter jejuni subsp. jejuni serotype O:23/36 (strain 81-176)).